The sequence spans 117 residues: Immunoglobulin lambda variable 6-57 (117 aa).

Residues 1–19 (MAWAPLLLTLLAHCTGSWA) form the signal peptide. Residues 20-44 (NFMLTQPHSVSESPGKTVTISCTGS) are framework-1. In terms of domain architecture, Ig-like spans 20 to 117 (NFMLTQPHSV…YYCQSYDSSN (98 aa)). Cysteine 41 and cysteine 110 are oxidised to a cystine. A complementarity-determining-1 region spans residues 45–52 (SGSIASNY). The segment at 53–69 (VQWYQQRPGSAPTTVIY) is framework-2. The disordered stretch occupies residues 65–97 (TTVIYEDNQRPSGVPDRFSGSIDSSSNSASLTI). A complementarity-determining-2 region spans residues 70-72 (EDN). The segment at 73-110 (QRPSGVPDRFSGSIDSSSNSASLTISGLKTEDEADYYC) is framework-3. Residues 83–97 (SGSIDSSSNSASLTI) are compositionally biased toward low complexity. The complementarity-determining-3 stretch occupies residues 111-117 (QSYDSSN).

In terms of assembly, immunoglobulins are composed of two identical heavy chains and two identical light chains; disulfide-linked.

It is found in the secreted. The protein localises to the cell membrane. V region of the variable domain of immunoglobulin light chains that participates in the antigen recognition. Immunoglobulins, also known as antibodies, are membrane-bound or secreted glycoproteins produced by B lymphocytes. In the recognition phase of humoral immunity, the membrane-bound immunoglobulins serve as receptors which, upon binding of a specific antigen, trigger the clonal expansion and differentiation of B lymphocytes into immunoglobulins-secreting plasma cells. Secreted immunoglobulins mediate the effector phase of humoral immunity, which results in the elimination of bound antigens. The antigen binding site is formed by the variable domain of one heavy chain, together with that of its associated light chain. Thus, each immunoglobulin has two antigen binding sites with remarkable affinity for a particular antigen. The variable domains are assembled by a process called V-(D)-J rearrangement and can then be subjected to somatic hypermutations which, after exposure to antigen and selection, allow affinity maturation for a particular antigen. This Homo sapiens (Human) protein is Immunoglobulin lambda variable 6-57.